A 1004-amino-acid polypeptide reads, in one-letter code: uncharacterized protein (1004 aa).

Residue asparagine 27 is glycosylated (N-linked (GlcNAc...) asparagine). Helical transmembrane passes span 38 to 58 (FGFSLNPVLWCLDHQQGLLAI), 77 to 97 (IVPDCSTIVHIALCAAYLIVI), 188 to 208 (LSPVVSVQIHPKDLGVILIAY), and 324 to 344 (FILMLGGLPKEAPVKGISLFS). N-linked (GlcNAc...) asparagine glycans are attached at residues asparagine 392, asparagine 418, and asparagine 421. The next 2 membrane-spanning stretches (helical) occupy residues 422–442 (MSLSIPPSLCFLASDFRVIAF) and 599–619 (MSNIGFVCIGYQDGGITIIDM). The N-linked (GlcNAc...) asparagine glycan is linked to asparagine 627. 2 consecutive transmembrane segments (helical) span residues 726–746 (GYPLPQEVFLVYIGDSGISVF) and 823–843 (GDYIFPTLGAHELAFGCVLGS). N-linked (GlcNAc...) asparagine glycosylation is present at asparagine 859.

To yeast YPR031w.

It is found in the membrane. This is an uncharacterized protein from Schizosaccharomyces pombe (strain 972 / ATCC 24843) (Fission yeast).